We begin with the raw amino-acid sequence, 147 residues long: Large ribosomal subunit protein uL13 (147 aa).

This sequence belongs to the universal ribosomal protein uL13 family. In terms of assembly, part of the 50S ribosomal subunit.

In terms of biological role, this protein is one of the early assembly proteins of the 50S ribosomal subunit, although it is not seen to bind rRNA by itself. It is important during the early stages of 50S assembly. The sequence is that of Large ribosomal subunit protein uL13 from Leuconostoc citreum (strain KM20).